We begin with the raw amino-acid sequence, 452 residues long: tRNA modification GTPase MnmE (452 aa).

The (6S)-5-formyl-5,6,7,8-tetrahydrofolate site is built by Arg-22, Glu-79, and Lys-119. The TrmE-type G domain maps to 215-375 (GMKVVIAGRP…LRQHLKQSMG (161 aa)). Asn-225 is a binding site for K(+). GTP is bound by residues 225 to 230 (NAGKSS), 244 to 250 (TDIAGTT), 269 to 272 (DTAG), and 333 to 336 (NKAD). Position 229 (Ser-229) interacts with Mg(2+). Positions 244, 246, and 249 each coordinate K(+). Thr-250 contacts Mg(2+). A (6S)-5-formyl-5,6,7,8-tetrahydrofolate-binding site is contributed by Lys-452.

Belongs to the TRAFAC class TrmE-Era-EngA-EngB-Septin-like GTPase superfamily. TrmE GTPase family. As to quaternary structure, homodimer. Heterotetramer of two MnmE and two MnmG subunits. K(+) is required as a cofactor.

It localises to the cytoplasm. Functionally, exhibits a very high intrinsic GTPase hydrolysis rate. Involved in the addition of a carboxymethylaminomethyl (cmnm) group at the wobble position (U34) of certain tRNAs, forming tRNA-cmnm(5)s(2)U34. The protein is tRNA modification GTPase MnmE of Histophilus somni (strain 2336) (Haemophilus somnus).